The primary structure comprises 1496 residues: Synaptojanin-2 (1496 aa).

Residues 120–444 (LKKILSSGVF…GHSLSKVFTG (325 aa)) enclose the SAC domain. Positions 889–968 (DATVVVNLQS…RAVKIRPKTK (80 aa)) constitute an RRM domain. Disordered regions lie at residues 1027–1073 (NQPG…DDAD), 1085–1166 (GEFR…YNVK), 1190–1405 (ASEE…PEAA), and 1427–1473 (NTWL…KTLG). Residues 1101-1115 (RPRPPQPPQRPPPPT) are compositionally biased toward pro residues. Serine 1124 and serine 1191 each carry phosphoserine. Positions 1124-1140 (SDASISSGTHGQYSILQ) are enriched in polar residues. Composition is skewed to pro residues over residues 1221 to 1235 (PQAP…PPRV) and 1319 to 1332 (VPPP…VPKV). Positions 1340–1359 (APAAFHLQVLQSNSQLLQGL) are enriched in low complexity. Composition is skewed to polar residues over residues 1383–1394 (FLSTSSATSPDS) and 1427–1442 (NTWL…SGTR).

This sequence belongs to the synaptojanin family. It in the central section; belongs to the inositol 1,4,5-trisphosphate 5-phosphatase family. As to quaternary structure, binds to GRB2. Isoform 2A binds to SYNJ2BP/OMP25. Isoform 2B2 C-terminal proline-rich region binds to a variety of SH3 domain-containing proteins including SH3GL1, SH3GL2, SH3GL3 and GRB2.

The protein resides in the cytoplasm. It is found in the cell membrane. It localises to the membrane raft. Its subcellular location is the presynapse. The protein localises to the cytoskeleton. The catalysed reaction is a 1,2-diacyl-sn-glycero-3-phospho-(1D-myo-inositol-4,5-bisphosphate) + H2O = a 1,2-diacyl-sn-glycero-3-phospho-(1D-myo-inositol 4-phosphate) + phosphate. Functionally, inositol 5-phosphatase which may be involved in distinct membrane trafficking and signal transduction pathways. May mediate the inhibitory effect of Rac1 on endocytosis. The polypeptide is Synaptojanin-2 (SYNJ2) (Homo sapiens (Human)).